Reading from the N-terminus, the 406-residue chain is Imidazolonepropionase (406 aa).

Fe(3+) is bound by residues His-65 and His-67. Zn(2+) is bound by residues His-65 and His-67. 3 residues coordinate 4-imidazolone-5-propanoate: Arg-74, Tyr-137, and His-170. Tyr-137 contributes to the N-formimidoyl-L-glutamate binding site. Residue His-235 participates in Fe(3+) binding. His-235 lines the Zn(2+) pocket. 4-imidazolone-5-propanoate is bound at residue Gln-238. Residue Asp-310 coordinates Fe(3+). Residue Asp-310 participates in Zn(2+) binding. Positions 312 and 314 each coordinate N-formimidoyl-L-glutamate. A 4-imidazolone-5-propanoate-binding site is contributed by Thr-315.

The protein belongs to the metallo-dependent hydrolases superfamily. HutI family. Zn(2+) is required as a cofactor. Fe(3+) serves as cofactor.

The protein localises to the cytoplasm. The enzyme catalyses 4-imidazolone-5-propanoate + H2O = N-formimidoyl-L-glutamate. It functions in the pathway amino-acid degradation; L-histidine degradation into L-glutamate; N-formimidoyl-L-glutamate from L-histidine: step 3/3. Its function is as follows. Catalyzes the hydrolytic cleavage of the carbon-nitrogen bond in imidazolone-5-propanoate to yield N-formimidoyl-L-glutamate. It is the third step in the universal histidine degradation pathway. This Vibrio vulnificus (strain YJ016) protein is Imidazolonepropionase.